A 98-amino-acid polypeptide reads, in one-letter code: MTKSELVEIIAQKQPQLSIKDVELAVKTIIEYMSQSLSQGQRIEIRGFGSFSLHYRAPRVGRNPKTGETVHLPAKYVPHFKPGKELRDEVNASLKAGY.

It belongs to the bacterial histone-like protein family. As to quaternary structure, heterodimer of an alpha and a beta chain.

Its function is as follows. This protein is one of the two subunits of integration host factor, a specific DNA-binding protein that functions in genetic recombination as well as in transcriptional and translational control. The polypeptide is Integration host factor subunit beta (Hahella chejuensis (strain KCTC 2396)).